The primary structure comprises 204 residues: Small ribosomal subunit protein uS4 (204 aa).

The interval 1–46 (MSKRHSSKYKIDRRMGENIWGRPKSPVNRREYGPGQHGQRRRSKIS) is disordered. The 64-residue stretch at 94-157 (RRLDMIVYRA…QEMALVLEAQ (64 aa)) folds into the S4 RNA-binding domain.

Belongs to the universal ribosomal protein uS4 family. In terms of assembly, part of the 30S ribosomal subunit. Contacts protein S5. The interaction surface between S4 and S5 is involved in control of translational fidelity.

Its function is as follows. One of the primary rRNA binding proteins, it binds directly to 16S rRNA where it nucleates assembly of the body of the 30S subunit. With S5 and S12 plays an important role in translational accuracy. The sequence is that of Small ribosomal subunit protein uS4 from Zymomonas mobilis subsp. mobilis (strain ATCC 31821 / ZM4 / CP4).